The chain runs to 618 residues: MATSVDQISKSLSTLGLQDLPVFREADIHHNPVDVYRSYISSELSKINGVDVSLIYPALETSISKDSADLNLPVPRLRVKGKPQELAQKWAEAFPKDLVEVTANGIFLRFNFNGPSLTKLILPIIWEQRENYGRNESGSGKVAVIEFSSPNIAKPFHAGHLRSTIIGSFLANLHESQGWKVHRVNYLGDWGKQFGLLAIGYKKYGDEDQLKSNPIRHLYDVYVKVNADATEEDEKIQKDKAEAESKGLPYTPPLSLHDKAREFFKRMEDGDEESLKVWARFRDLSITKLKDTYDRLNIHYDEYDGESQVSLELMNKMVDELRSLNLIEEDGGALLIDLSKHDKKLGKAIVQKRDGTTLYLTRDIGTAYKRYEKYKFDKSIYVVSSQQDMYFSQLFKIFELMGFDWAKKCVHINYGLVQGMSTRKGKAVFLDDIMEVAKEEMHKVMQKNEEKYAQVENPEEVADIVGKTAIRIQDSTGKRINNYAFDWSRMTSFEGDTGPYLQYAHSRLSSVRRNVNYTDEEIMGANLELLTEPDAYDLVRLLGQYPDVLKNAFRFQETSTVVTYLFKLTHAVSKLYDILWVRGRERDIQLARLALFGAAKQVLNNGMTLLGLTPLERM.

Interaction with tRNA stretches follow at residues 60–61 (ET) and 104–109 (NGIFLR). L-arginine contacts are provided by residues 146 to 151 (EFSSPN), H160, Y359, D363, and Q387. A 'HIGH' region motif is present at residues 149-160 (SPNIAKPFHAGH). Positions 496-510 (DTGPYLQYAHSRLSS) are interaction with tRNA.

The protein belongs to the class-I aminoacyl-tRNA synthetase family.

It localises to the cytoplasm. It catalyses the reaction tRNA(Arg) + L-arginine + ATP = L-arginyl-tRNA(Arg) + AMP + diphosphate. Its function is as follows. Forms part of a macromolecular complex that catalyzes the attachment of specific amino acids to cognate tRNAs during protein synthesis. The polypeptide is Probable arginine--tRNA ligase, cytoplasmic (mrs1) (Schizosaccharomyces pombe (strain 972 / ATCC 24843) (Fission yeast)).